Here is a 439-residue protein sequence, read N- to C-terminus: Hydroxyornithine transacylase SID3 (439 aa).

The PTS1-type peroxisomal targeting signal signature appears at 437–439; sequence SKL.

Belongs to the lysine N-acyltransferase mbtK family.

The protein resides in the peroxisome. The protein operates within siderophore biosynthesis. Functionally, hydroxyornithine transacylase; part of the gene cluster that mediates the biosynthesis of hydroxamate-containing siderophores that play a critical role in virulence via intracellular iron acquisition during macrophage infection. The polypeptide is Hydroxyornithine transacylase SID3 (Ajellomyces capsulatus (Darling's disease fungus)).